The sequence spans 1034 residues: Isoleucine--tRNA ligase (1034 aa).

The 'HIGH' region signature appears at Pro46 to Thr56. The short motif at Lys598–Ser602 is the 'KMSKS' region element. Lys601 contributes to the ATP binding site.

Belongs to the class-I aminoacyl-tRNA synthetase family. IleS type 2 subfamily. Monomer. Zn(2+) serves as cofactor.

Its subcellular location is the cytoplasm. The catalysed reaction is tRNA(Ile) + L-isoleucine + ATP = L-isoleucyl-tRNA(Ile) + AMP + diphosphate. Its function is as follows. Catalyzes the attachment of isoleucine to tRNA(Ile). As IleRS can inadvertently accommodate and process structurally similar amino acids such as valine, to avoid such errors it has two additional distinct tRNA(Ile)-dependent editing activities. One activity is designated as 'pretransfer' editing and involves the hydrolysis of activated Val-AMP. The other activity is designated 'posttransfer' editing and involves deacylation of mischarged Val-tRNA(Ile). The chain is Isoleucine--tRNA ligase from Methanococcus maripaludis (strain DSM 14266 / JCM 13030 / NBRC 101832 / S2 / LL).